The primary structure comprises 1492 residues: ATP-binding cassette sub-family C member 10 (1492 aa).

9 helical membrane passes run 32-52, 70-90, 102-122, 133-153, 172-192, 293-313, 320-340, 391-411, and 414-434; these read LVLSALPHALLAVLSACYLGT, LAASFLLSVFPLLDLLPVALP, VLAGCVAAVAWISHSLALWVL, PLALALVALLPAPALVLTVLW, LCLLILQLAALLAYALGWAAP, LVGTMLGFSGPLLLSLLVGFL, LSHGLLYALGLAGGAVLGAVL, LLNFAGSFHEAWGLPLQLAIT, and LLYQQVGVAFVGGLILALLLV. One can recognise an ABC transmembrane type-1 1 domain in the interval 285–563; that stretch reads YLALGLLKLV…FPWVINGLLE (279 aa). T463 bears the Phosphothreonine mark. S467 is modified (phosphoserine). A run of 2 helical transmembrane segments spans residues 507–527 and 538–558; these read VYLWAALPVVISIVIFITYVL and FTALALVRMLILPLNNFPWVI. The region spanning 598-824 is the ABC transporter 1 domain; it reads LELHGALFSW…VQAVPKAWAE (227 aa). Position 633-640 (633-640) interacts with ATP; that stretch reads GKVGCGKS. The tract at residues 825–860 is disordered; sequence NGQESDSATAQSVQNPEKTKEGLEEEQSTSGRLLQE. Over residues 826–840 the composition is skewed to polar residues; it reads GQESDSATAQSVQNP. 6 helical membrane-spanning segments follow: residues 875–895, 933–953, 974–994, 1051–1071, 1153–1173, and 1182–1202; these read AYWKAVGQGLALAILFSLLLM, LFSPQLLLFSPGNLYIPVFPL, IAGVNSLCTLLRAVLFAAGTL, AGLLGLLAVLGSGLPWLLLLL, IRLQLMGAAVVSAIAGIALVQ, and GLVGLSLSYALSLTGLLSGLV. The ABC transmembrane type-1 2 domain maps to 885-1210; it reads ALAILFSLLL…LVSSFTQTEA (326 aa). The ABC transporter 2 domain maps to 1246 to 1479; that stretch reads VEFQDVVLAY…PHSLFQQLLQ (234 aa). ATP is bound at residue 1280–1287; sequence GRTGSGKS.

It belongs to the ABC transporter superfamily. ABCC family. Conjugate transporter (TC 3.A.1.208) subfamily. In testis, localized to peritubular myoid cells, Leydig cells, along the basal membrane of Sertoli cells, moderately in the adluminal compartment of the seminiferous tubules, and in vascular endothelial cells. As to expression, specifically expressed in spleen. In terms of tissue distribution, widely expressed.

The protein resides in the cell membrane. Its subcellular location is the basolateral cell membrane. It is found in the basal cell membrane. The catalysed reaction is ATP + H2O + xenobioticSide 1 = ADP + phosphate + xenobioticSide 2.. It carries out the reaction an S-substituted glutathione(in) + ATP + H2O = an S-substituted glutathione(out) + ADP + phosphate + H(+). The enzyme catalyses 17beta-estradiol 17-O-(beta-D-glucuronate)(in) + ATP + H2O = 17beta-estradiol 17-O-(beta-D-glucuronate)(out) + ADP + phosphate + H(+). It catalyses the reaction leukotriene C4(in) + ATP + H2O = leukotriene C4(out) + ADP + phosphate + H(+). ATP-dependent transporter of the ATP-binding cassette (ABC) family that actively extrudes physiological compounds, and xenobiotics from cells. Lipophilic anion transporter that mediates ATP-dependent transport of glucuronide conjugates such as estradiol-17-beta-o-glucuronide and GSH conjugates such as leukotriene C4 (LTC4). May contribute to regulate the transport of organic compounds in testes across the blood-testis-barrier. Mediates multidrug resistance (MDR) in cancer cells by preventing the intracellular accumulation of certain antitumor drugs, such as, docetaxel and paclitaxel. Does not transport glycocholic acid, taurocholic acid, MTX, folic acid, cAMP, or cGMP. This Homo sapiens (Human) protein is ATP-binding cassette sub-family C member 10 (ABCC10).